The chain runs to 223 residues: Translation initiation factor 6 (223 aa).

Belongs to the eIF-6 family.

Its function is as follows. Binds to the 50S ribosomal subunit and prevents its association with the 30S ribosomal subunit to form the 70S initiation complex. In Saccharolobus islandicus (strain M.16.27) (Sulfolobus islandicus), this protein is Translation initiation factor 6.